The primary structure comprises 274 residues: MSSQLQQVIEAAWEDRANLSVASAPAAVREAVAHVLGELDAGRIRVAERQAVGQWQVNQWVKKAVLLSFRLNDNVVMGDGALTFFDKVPSKFGGMDEAALRATGVRVVPPAVARRGSFIARGAILMPSYVNIGAYVDEGTMVDTWATVGSCAQIGKNVHLSGGVGIGGVLEPLQAGPTIIEDNCFIGARSEVVEGVVVEENSVISMGVYIGQSTKIYDRATGEVTYGRIPSGSVVVSGNLPSADGKYSLYCAVIVKRVDAQTRAKTSINDLLRG.

Belongs to the transferase hexapeptide repeat family.

Its subcellular location is the cytoplasm. The enzyme catalyses (S)-2,3,4,5-tetrahydrodipicolinate + succinyl-CoA + H2O = (S)-2-succinylamino-6-oxoheptanedioate + CoA. It participates in amino-acid biosynthesis; L-lysine biosynthesis via DAP pathway; LL-2,6-diaminopimelate from (S)-tetrahydrodipicolinate (succinylase route): step 1/3. The sequence is that of 2,3,4,5-tetrahydropyridine-2,6-dicarboxylate N-succinyltransferase from Leptothrix cholodnii (strain ATCC 51168 / LMG 8142 / SP-6) (Leptothrix discophora (strain SP-6)).